An 88-amino-acid chain; its full sequence is Cell division topological specificity factor (88 aa).

The protein belongs to the MinE family.

Its function is as follows. Prevents the cell division inhibition by proteins MinC and MinD at internal division sites while permitting inhibition at polar sites. This ensures cell division at the proper site by restricting the formation of a division septum at the midpoint of the long axis of the cell. This Clostridium botulinum (strain Alaska E43 / Type E3) protein is Cell division topological specificity factor.